A 208-amino-acid chain; its full sequence is Small ribosomal subunit protein eS8 (208 aa).

Belongs to the eukaryotic ribosomal protein eS8 family. As to quaternary structure, component of the small ribosomal subunit. Identified in a IGF2BP1-dependent mRNP granule complex containing untranslated mRNAs. Part of the small subunit (SSU) processome, composed of more than 70 proteins and the RNA chaperone small nucleolar RNA (snoRNA) U3.

The protein localises to the cytoplasm. It localises to the membrane. The protein resides in the nucleus. Its subcellular location is the nucleolus. Its function is as follows. Component of the small ribosomal subunit. The ribosome is a large ribonucleoprotein complex responsible for the synthesis of proteins in the cell. Part of the small subunit (SSU) processome, first precursor of the small eukaryotic ribosomal subunit. During the assembly of the SSU processome in the nucleolus, many ribosome biogenesis factors, an RNA chaperone and ribosomal proteins associate with the nascent pre-rRNA and work in concert to generate RNA folding, modifications, rearrangements and cleavage as well as targeted degradation of pre-ribosomal RNA by the RNA exosome. The chain is Small ribosomal subunit protein eS8 (rps-8) from Caenorhabditis elegans.